The primary structure comprises 509 residues: Maturase K (509 aa).

The protein belongs to the intron maturase 2 family. MatK subfamily.

The protein localises to the plastid. It is found in the chloroplast. Functionally, usually encoded in the trnK tRNA gene intron. Probably assists in splicing its own and other chloroplast group II introns. This is Maturase K from Nicotiana clevelandii (Wild tobacco).